Consider the following 102-residue polypeptide: Integration host factor subunit beta (102 aa).

It belongs to the bacterial histone-like protein family. In terms of assembly, heterodimer of an alpha and a beta chain.

In terms of biological role, this protein is one of the two subunits of integration host factor, a specific DNA-binding protein that functions in genetic recombination as well as in transcriptional and translational control. In Marinomonas sp. (strain MWYL1), this protein is Integration host factor subunit beta.